The chain runs to 211 residues: Thymidylate kinase (211 aa).

7 to 14 serves as a coordination point for ATP; sequence GIDASGKS.

This sequence belongs to the thymidylate kinase family.

The catalysed reaction is dTMP + ATP = dTDP + ADP. In terms of biological role, phosphorylation of dTMP to form dTDP in both de novo and salvage pathways of dTTP synthesis. The protein is Thymidylate kinase of Mesomycoplasma hyopneumoniae (strain 232) (Mycoplasma hyopneumoniae).